We begin with the raw amino-acid sequence, 825 residues long: Thioredoxin domain-containing protein 16 (825 aa).

Positions 1–27 (MFSGFNVFRVGISFVIMCIFYMPTVNS) are cleaved as a signal peptide. The 104-residue stretch at 392–495 (LTVELTEETF…EDLLKFIQLN (104 aa)) folds into the Thioredoxin domain. The cysteines at positions 449 and 456 are disulfide-linked. The N-linked (GlcNAc...) asparagine glycan is linked to Asn460. Positions 762-787 (RKVPKCMKETDVQENDKEQHEDKSAV) are disordered. Residues 767 to 787 (CMKETDVQENDKEQHEDKSAV) show a composition bias toward basic and acidic residues. Residues 816–819 (DKEL) carry the Mediates endoplasmic reticulum retention motif.

As to quaternary structure, interacts with FOXRED2. In terms of processing, glycosylated.

Its subcellular location is the secreted. It is found in the endoplasmic reticulum lumen. This Homo sapiens (Human) protein is Thioredoxin domain-containing protein 16.